The primary structure comprises 99 residues: Aspartyl/glutamyl-tRNA(Asn/Gln) amidotransferase subunit C (99 aa).

It belongs to the GatC family. Heterotrimer of A, B and C subunits.

The catalysed reaction is L-glutamyl-tRNA(Gln) + L-glutamine + ATP + H2O = L-glutaminyl-tRNA(Gln) + L-glutamate + ADP + phosphate + H(+). The enzyme catalyses L-aspartyl-tRNA(Asn) + L-glutamine + ATP + H2O = L-asparaginyl-tRNA(Asn) + L-glutamate + ADP + phosphate + 2 H(+). Its function is as follows. Allows the formation of correctly charged Asn-tRNA(Asn) or Gln-tRNA(Gln) through the transamidation of misacylated Asp-tRNA(Asn) or Glu-tRNA(Gln) in organisms which lack either or both of asparaginyl-tRNA or glutaminyl-tRNA synthetases. The reaction takes place in the presence of glutamine and ATP through an activated phospho-Asp-tRNA(Asn) or phospho-Glu-tRNA(Gln). The protein is Aspartyl/glutamyl-tRNA(Asn/Gln) amidotransferase subunit C of Corynebacterium diphtheriae (strain ATCC 700971 / NCTC 13129 / Biotype gravis).